The following is a 116-amino-acid chain: Ribosome-binding factor A (116 aa).

Belongs to the RbfA family. In terms of assembly, monomer. Binds 30S ribosomal subunits, but not 50S ribosomal subunits or 70S ribosomes.

The protein resides in the cytoplasm. Its function is as follows. One of several proteins that assist in the late maturation steps of the functional core of the 30S ribosomal subunit. Associates with free 30S ribosomal subunits (but not with 30S subunits that are part of 70S ribosomes or polysomes). Required for efficient processing of 16S rRNA. May interact with the 5'-terminal helix region of 16S rRNA. The sequence is that of Ribosome-binding factor A from Streptococcus agalactiae.